A 190-amino-acid polypeptide reads, in one-letter code: MAGVDEVGRGALFGPVVAAAVLVPIEAINQLQALGVKDSKQLSPQHRSQLAQALPDYVHSYGISFADVPTINRVNIRQASLLAMERAVQKLPVMPAWVLVDGRDTLPHIAMAQMAVTGGDRKSLLISAASILAKVWRDTLITRLAERFPGYDLASNKGYGTAKHRQGLRQYGATPLHRPLFCRKIIENPD.

The RNase H type-2 domain maps to 1–190 (MAGVDEVGRG…FCRKIIENPD (190 aa)). A divalent metal cation contacts are provided by aspartate 5, glutamate 6, and aspartate 101.

The protein belongs to the RNase HII family. Requires Mn(2+) as cofactor. The cofactor is Mg(2+).

It is found in the cytoplasm. It carries out the reaction Endonucleolytic cleavage to 5'-phosphomonoester.. Its function is as follows. Endonuclease that specifically degrades the RNA of RNA-DNA hybrids. The polypeptide is Ribonuclease HII (rnhB) (Synechocystis sp. (strain ATCC 27184 / PCC 6803 / Kazusa)).